The chain runs to 563 residues: Inclusion body clearance protein IML2 (563 aa).

This sequence belongs to the IML2 family. As to quaternary structure, interacts with lipid droplet proteins.

It is found in the cytoplasm. The protein localises to the nucleus. Functionally, inclusion body (IB) resident protein that interacts strongly with lipid droplet (LD) proteins. Involved in LD-mediated IB clearing after protein folding stress, probably by enabling access to the IBs of an LD-stored soluble sterol derivative that acts as a chaperone in inclusion clearing. In Schizosaccharomyces pombe (strain 972 / ATCC 24843) (Fission yeast), this protein is Inclusion body clearance protein IML2.